We begin with the raw amino-acid sequence, 401 residues long: Phosphoglycerate kinase (401 aa).

Residues 21 to 23 (DFN), Arg36, 59 to 62 (HLGR), Arg119, and Arg160 contribute to the substrate site. Residues Lys212, Glu330, and 357–360 (GGDS) contribute to the ATP site.

The protein belongs to the phosphoglycerate kinase family. In terms of assembly, monomer.

It localises to the cytoplasm. It carries out the reaction (2R)-3-phosphoglycerate + ATP = (2R)-3-phospho-glyceroyl phosphate + ADP. It participates in carbohydrate degradation; glycolysis; pyruvate from D-glyceraldehyde 3-phosphate: step 2/5. This is Phosphoglycerate kinase from Limosilactobacillus fermentum (strain NBRC 3956 / LMG 18251) (Lactobacillus fermentum).